We begin with the raw amino-acid sequence, 552 residues long: Methyl-coenzyme M reductase II subunit alpha (552 aa).

Q150 lines the coenzyme F430 pocket. Residues R228, 259-260 (KH), and R273 contribute to the coenzyme B site. 2 residues coordinate coenzyme M: Y335 and Y446.

It belongs to the methyl-coenzyme M reductase alpha subunit family. As to quaternary structure, MCR is a hexamer of two alpha, two beta, and two gamma chains, forming a dimer of heterotrimers. The cofactor is coenzyme F430.

It catalyses the reaction coenzyme B + methyl-coenzyme M = methane + coenzyme M-coenzyme B heterodisulfide. It functions in the pathway one-carbon metabolism; methyl-coenzyme M reduction; methane from methyl-coenzyme M: step 1/1. Functionally, component of the methyl-coenzyme M reductase (MCR) I that catalyzes the reductive cleavage of methyl-coenzyme M (CoM-S-CH3 or 2-(methylthio)ethanesulfonate) using coenzyme B (CoB or 7-mercaptoheptanoylthreonine phosphate) as reductant which results in the production of methane and the mixed heterodisulfide of CoB and CoM (CoM-S-S-CoB). This is the final step in methanogenesis. The polypeptide is Methyl-coenzyme M reductase II subunit alpha (mrtA) (Methanocaldococcus jannaschii (strain ATCC 43067 / DSM 2661 / JAL-1 / JCM 10045 / NBRC 100440) (Methanococcus jannaschii)).